We begin with the raw amino-acid sequence, 176 residues long: Zinc finger A20 and AN1 domain-containing stress-associated protein 9 (176 aa).

The A20-type zinc-finger motif lies at 16-50; the sequence is ASEPKLCVKGCGFFGSPSNMDLCSKCYRGICAEEA. Positions 22, 26, 38, 41, 117, 120, 131, 133, 138, 141, 147, and 149 each coordinate Zn(2+). An AN1-type zinc finger spans residues 111 to 157; sequence PARTNRCLCCNKKVGIMGFKCKCGSTFCGEHRYPETHDCSFDFKEVG.

Its function is as follows. May be involved in environmental stress response. The chain is Zinc finger A20 and AN1 domain-containing stress-associated protein 9 (SAP9) from Arabidopsis thaliana (Mouse-ear cress).